Reading from the N-terminus, the 256-residue chain is Thiazole synthase (256 aa).

Residue Lys-95 is the Schiff-base intermediate with DXP of the active site. Residues Gly-156, 182-183, and 204-205 contribute to the 1-deoxy-D-xylulose 5-phosphate site; these read AG and NT.

This sequence belongs to the ThiG family. In terms of assembly, homotetramer. Forms heterodimers with either ThiH or ThiS.

The protein localises to the cytoplasm. The catalysed reaction is [ThiS sulfur-carrier protein]-C-terminal-Gly-aminoethanethioate + 2-iminoacetate + 1-deoxy-D-xylulose 5-phosphate = [ThiS sulfur-carrier protein]-C-terminal Gly-Gly + 2-[(2R,5Z)-2-carboxy-4-methylthiazol-5(2H)-ylidene]ethyl phosphate + 2 H2O + H(+). It participates in cofactor biosynthesis; thiamine diphosphate biosynthesis. Functionally, catalyzes the rearrangement of 1-deoxy-D-xylulose 5-phosphate (DXP) to produce the thiazole phosphate moiety of thiamine. Sulfur is provided by the thiocarboxylate moiety of the carrier protein ThiS. In vitro, sulfur can be provided by H(2)S. The chain is Thiazole synthase from Idiomarina loihiensis (strain ATCC BAA-735 / DSM 15497 / L2-TR).